The sequence spans 438 residues: Serine carboxypeptidase-like 5 (438 aa).

Positions M1 to S28 are cleaved as a signal peptide. Intrachain disulfides connect C87–C328, C251–C263, and C287–C294. N-linked (GlcNAc...) asparagine glycosylation is present at N108. Residue S183 is part of the active site. N347 carries an N-linked (GlcNAc...) asparagine glycan. Residue D363 is part of the active site. N379 carries N-linked (GlcNAc...) asparagine glycosylation. H416 is a catalytic residue.

The protein belongs to the peptidase S10 family. Expressed in seedlings, roots, and siliques.

It is found in the secreted. In terms of biological role, probable carboxypeptidase. This is Serine carboxypeptidase-like 5 (SCPL5) from Arabidopsis thaliana (Mouse-ear cress).